We begin with the raw amino-acid sequence, 238 residues long: Polynucleotide 3'-phosphatase (238 aa).

It belongs to the DNA 3' phosphatase family.

Its subcellular location is the nucleus. The enzyme catalyses a 3'end (2'-deoxyribonucleotide 3'-phosphate)-DNA + H2O = a 3'-end 2'-deoxyribonucleotide-DNA + phosphate. Its function is as follows. Dephosphorylate DNA's 3'-phosphate termini. Has a role in the repair of breaks in single-stranded DNA. This is Polynucleotide 3'-phosphatase (TPP1) from Saccharomyces cerevisiae (strain ATCC 204508 / S288c) (Baker's yeast).